A 1816-amino-acid chain; its full sequence is MFNKSFGTPFGGSTGGFGTTSTFGQNTGFGTTSGGAFGTSAFGSSNNTGGLFGNSQTKPGGLFGTSSFSQPATSTSTGFGFGTSTGTSNSLFGTASTGTSLFSSQNNAFAQNKPTGFGNFGTSTSSGGLFGTTNTTSNPFGSTSGSLFGPSSFTAAPTGTTIKFNPPTGTDTMVKAGVSTNISTKHQCITAMKEYESKSLEELRLEDYQANRKGPQNQVGGGTTAGLFGSSPATSSATGLFSSSTTNSAFSYGQNKTAFGTSTTGFGTNPGGLFGQQNQQTTSLFSKPFGQATTTPNTGFSFGNTSTLGQPSTNTMGLFGVTQASQPGGLFGTATNTSTGTAFGTGTGLFGQPNTGFGAVGSTLFGNNKLTTFGTSTTSAPSFGTTSGGLFGNKPTLTLGTNTNTSNFGFGTNNSGSSIFGSKPAAGTLGTGLGTGFGTALGAGQASLFGNNQPKIGGPLGTGAFGAPGFNTSTAILGFGAPQAPVALTDPNASAAQQAVLQQHLNSLTYSPFGDSPLFRNPMSDPKKKEERLKPTNPAAQKALTTPTHYKLTPRPATRVRPKALQTTGTAKSHLFDGLDDDEPSLANGAFMPKKSIKKLVLKNLNNSNLFSPVNHDSEDLASPSEYPENGERFSFLSKPVDENNQQDGEDDSLVSRFYTNPIAKPIPQTPESVGNKNNSSSNVEDTIVALNMRAALRNGLEGSSEETSFHDESLQDDREEIENNAYHIHPAGIVLTKVGYYTIPSMDDLAKITNEKGECIVSDFTIGRKGYGSIYFEGDVNLTNLNLDDIVHIRRKEVIVYVDDNQKPPVGEGLNRKAEVTLDGVWPTDKTSRCLIKSPDRLADINYEGRLEAVSRKQGAQFKEYRPETGSWVFKVSHFSKYGLQDSDEEEEEHPPKTTSKKLKTAPLPPAGQATTFQMTLNGKPAPPPQSQSPEVEQLGRVVELDSDMVDITQEPVPDSVLEESVPEDQEPVSASTHIASSLGINPHVLQIMKASLLVDEEDVDAMDQRFGHIPSKGETVQEICSPRLPISASHSSKSRSIVGGLLQSKFASGTFLSPSASVQECRTPRTSSRMNIPSTSPWSVPLPLATVFTVPSPAPEVQLKTVGIRRQPGLVPLEKSITYGKGKLLMDMALFMGRSFRVGWGPNWTLANSGEQLHGSHELENHQVADSMEYGFLPNPVAVKSLSESPFKVHLEKLGLRQRKLDEDLQLYQTPLELKLKHSTVHVDELCPLIVPNPGVSVIHDYADWVKDSPGDFLELPIVKHWSLTWTLCEALWGHLKELDGQLDEPSEYIQTLERRRAFSRWLSHTAAPQIEEEVSLTRRDSPVEAVFSYLTGSRISGACCLAQQSGDHRLALLLSQLVGSQSVRELLTMQLADWHQLQADSFIHDERLRIFALLAGKPVWQLSEQKQINVCSQLDWKRTLAIHLWYLLPPTASISRALSMYEEAFQNTPEGDKYACSPLPSYLEGCGCMVEEEKDSRRPLQDVCFHLLKLYSDRHYELNQLLEPRSITADPLDYRLSWHLWEVLRALNYTHLSEQCEGVLQASYAGQLESEGLWEWAIFVFLHIDNSGMREKAVRELLTRHCQLSETPESWAKEAFLTQKLCVPAEWIHEAKAVRAHMESNKHLEALYLFKAGHWNRCHKLVIRHLASDAIINENYDYLKGFLEDLAPPERSSLIQDWETSGLVYLDYIRVIEMLHRIQQVDCSGYELEHLHTKVTSLCNRIEQIPCYNAKDRLAQSDMAKRVANLLRVVLSLQHAPDATSNSTPDPQRVPLRLLAPHIGRLPMPEDYALEELRGLTQSYLRELTVGSQ.

Residues 1–156 are FG repeats 1; it reads MFNKSFGTPF…LFGPSSFTAA (156 aa). The segment at 157-213 is GLEBS; interaction with RAE1; that stretch reads PTGTTIKFNPPTGTDTMVKAGVSTNISTKHQCITAMKEYESKSLEELRLEDYQANRK. Positions 214-480 are FG repeats 2; the sequence is GPQNQVGGGT…NTSTAILGFG (267 aa). A disordered region spans residues 512–535; sequence PFGDSPLFRNPMSDPKKKEERLKP. Ser524 carries the phosphoserine modification. A compositionally biased stretch (basic and acidic residues) spans 525 to 534; sequence DPKKKEERLK. Lys563 is covalently cross-linked (Glycyl lysine isopeptide (Lys-Gly) (interchain with G-Cter in SUMO2)). Lys603 carries the post-translational modification N6-acetyllysine; alternate. Lys603 is covalently cross-linked (Glycyl lysine isopeptide (Lys-Gly) (interchain with G-Cter in SUMO2); alternate). Ser608, Ser612, Ser618, Ser623, Ser625, and Ser653 each carry phosphoserine. Residues 663 to 682 are disordered; the sequence is IAKPIPQTPESVGNKNNSSS. A Glycyl lysine isopeptide (Lys-Gly) (interchain with G-Cter in SUMO2) cross-link involves residue Lys665. Thr670 is modified (phosphothreonine). Phosphoserine occurs at positions 673, 680, 681, and 839. Residues 673-682 show a composition bias toward low complexity; it reads SVGNKNNSSS. The Peptidase S59 domain occupies 738–880; that stretch reads KVGYYTIPSM…GSWVFKVSHF (143 aa). Residue Ser881 is the Nucleophile of the active site. Positions 886–937 are disordered; it reads QDSDEEEEEHPPKTTSKKLKTAPLPPAGQATTFQMTLNGKPAPPPQSQSPEV. Ser888, Ser934, Ser1027, Ser1042, Ser1059, and Ser1063 each carry phosphoserine. Thr1069 carries the post-translational modification Phosphothreonine. Ser1328 is subject to Phosphoserine. The residue at position 1771 (Thr1771) is a Phosphothreonine.

Belongs to the nucleoporin GLFG family. In terms of assembly, part of the nuclear pore complex (NPC). Interacts directly with NUP96. Part of the Nup160 subcomplex in the nuclear pore which is composed of NUP160, NUP133, NUP107 and NUP96; this complex plays a role in RNA export and in tethering NUP98 and NUP153 to the nucleus. Interacts with RAE1. Does not interact with TPR. Interacts directly with NUP88 and NUP214, subunits of the cytoplasmic filaments of the NPC. Interacts (via N-terminus) with DHX9 (via DRBM, OB-fold and RGG domains); this interaction occurs in a RNA-dependent manner and stimulates DHX9-mediated ATPase activity. Post-translationally, autoproteolytically cleaved to yield Nup98 and Nup96 or Nup98 only, respectively. Cleaved Nup98 is necessary for the targeting of Nup98 to the nuclear pore and the interaction with Nup96.

It localises to the nucleus membrane. Its subcellular location is the nucleus. It is found in the nuclear pore complex. The protein localises to the nucleoplasm. Functionally, plays a role in the nuclear pore complex (NPC) assembly and/or maintenance. NUP98 and NUP96 are involved in the bidirectional transport across the NPC. May anchor NUP153 and TPR to the NPC. In cooperation with DHX9, plays a role in transcription and alternative splicing activation of a subset of genes. Involved in the localization of DHX9 in discrete intranuclear foci (GLFG-body). This is Nuclear pore complex protein Nup98-Nup96 (Nup98) from Mus musculus (Mouse).